The chain runs to 459 residues: Proton-coupled folate transporter (459 aa).

Position 1 is an N-acetylmethionine (Met1). At 1 to 25 (MEGRVSPVGSSHRLLTAAVLFRGPV) the chain is on the cytoplasmic side. Residue Ser6 is modified to Phosphoserine. A helical transmembrane segment spans residues 26–44 (EPLVFLANFALVLQGPLTT). The Extracellular segment spans residues 45-82 (QYIWHRISTELGYNGTRHRENCGNQSADPVLKEVETLT). Asn58 and Asn68 each carry an N-linked (GlcNAc...) asparagine glycan. Cys66 and Cys298 are oxidised to a cystine. A helical membrane pass occupies residues 83-108 (SHWTLYMNVGGFLVGLFWSTLLGAWS). At 109–112 (DRVG) the chain is on the cytoplasmic side. The helical transmembrane segment at 113 to 135 (RRPLLVLASLGLLLQAVVSIFVV) threads the bilayer. Residues 136 to 140 (QLQLH) are Extracellular-facing. A helical transmembrane segment spans residues 141 to 154 (IGFFVLGRALCALL). Topologically, residues 155–177 (GDFNGLLAASFASVADVSSNHSR) are cytoplasmic. The H(+) site is built by Asp156 and Glu185. The chain crosses the membrane as a helical span at residues 178-203 (TFRMALLEACIGVAGTLASLLGGHWL). Residues 204 to 208 (RAQGY) are Extracellular-facing. Residues 209–227 (ANPFWLALAVLIVMTLYAA) form a helical membrane-spanning segment. The Cytoplasmic segment spans residues 228–266 (FCFGETVKEPKSTRLFTLRHHRSIVQLYVVPAPEKSRMH). Residues 267-289 (LALYSLAIFVVVTVHFGAQDILT) traverse the membrane as a helical segment. Residue His281 participates in H(+) binding. At 290–302 (LYELSTPLCWDSK) the chain is on the extracellular side. Residues 303–325 (LIGYGSAAQHLPYLTSLLGLRLL) traverse the membrane as a helical segment. The Cytoplasmic segment spans residues 326–331 (QFCLAD). Residues 332–351 (TWVAEIGLAFNILGMVVFAF) form a helical membrane-spanning segment. Residues 352–355 (ATIT) are Extracellular-facing. A helical membrane pass occupies residues 356 to 376 (PLMFTGYGLLFLSLVTTPVIR). Residues 377–388 (AKLSKLVSESEQ) are Cytoplasmic-facing. Residues 389 to 414 (GALFSAVACVNSLAMLMASGIFNSLY) traverse the membrane as a helical segment. Topologically, residues 415–422 (PATLNFMK) are extracellular. Residues 423–441 (GFPFLLGAGLLFIPAILIG) traverse the membrane as a helical segment. At 442-459 (VLEKVNPHPEFQQFPQNS) the chain is on the cytoplasmic side.

It belongs to the major facilitator superfamily. SLC46A family. In terms of assembly, monomer. As to expression, expressed almost exclusively in the small intestine: expressed at high level in the upper half of the small intestine (duodenum and jejunum), expression decreases downwardly in the subsequent quarter and is undetectable in the last quarter (the lowest ileum). Expressed at low level in other tissues, including liver.

The protein resides in the cell membrane. It localises to the apical cell membrane. The protein localises to the basolateral cell membrane. Its subcellular location is the endosome membrane. It is found in the cytoplasm. It carries out the reaction folate(in) + H(+)(in) = folate(out) + H(+)(out). The enzyme catalyses (6S)-5-methyl-5,6,7,8-tetrahydrofolate(in) + H(+)(in) = (6S)-5-methyl-5,6,7,8-tetrahydrofolate(out) + H(+)(out). The catalysed reaction is methotrexate(in) + H(+)(in) = methotrexate(out) + H(+)(out). It catalyses the reaction pemetrexed(in) + H(+)(in) = pemetrexed(out) + H(+)(out). In contrast to human ortholog, not inhibited by myricetin. Its function is as follows. Proton-coupled folate symporter that mediates folate absorption using an H(+) gradient as a driving force. Involved in the intestinal absorption of folates at the brush-border membrane of the proximal jejunum, and the transport from blood to cerebrospinal fluid across the choroid plexus. Functions at acidic pH via alternate outward- and inward-open conformation states. Protonation of residues in the outward open state primes the protein for transport. Binding of folate promotes breaking of salt bridge network and subsequent closure of the extracellular gate, leading to the inward-open state and release of protons and folate. Also able to transport antifolate drugs, such as methotrexate and pemetrexed. Involved in FOLR1-mediated endocytosis by serving as a route of export of folates from acidified endosomes. Also acts as a lower-affinity, pH-independent heme carrier protein and constitutes the main importer of heme in the intestine. Imports heme in the retina and retinal pigment epithelium, in neurons of the hippocampus, in hepatocytes and in the renal epithelial cells. Hence, participates in the trafficking of heme and increases intracellular iron content. This chain is Proton-coupled folate transporter, found in Rattus norvegicus (Rat).